The chain runs to 508 residues: MLFLAFHAGSWGSWCCCCCVITADRPWDRGRRWQLEMADTPSVYETRFEAAVKVIQSLPKNGSFQPTNEMMLKFYSFYKQATEGPCKLSRPGFWDPIGRYKWDAWSSLGDMTKEEAMIAYVEEMKKIIETMPMTEKVEELLHVIGPFYEIVEDKKSSKSSDLTSDLGNVLTSSNAKAVNGKAESSDSGAESEEEEAQEELKGAEQSGSDDKKTLKKSADKNLEIIVTNGYKGSFVQDIQSDIHTDSSRSTRSSEDEKPGDESSQQTGHTIVCAHQDRNEDPSEDASGIHHLTSDSDSEVYCDSMEQFGQEEYYLGGDPTQHLESSGFCEDAQQSPGNGSIGKMWMVAVKGKGEVKHGGEDGRSSSGAPHRETRGGESEDFSSVRRGRGNRIPHLSEGPKGRQVGSGGDGERWGSDRGSRGSLNEQIALVLIRLQEDMQNVLQRLHKLETLTASQAKLSLQTSNQPSSQRPAWWPFEMSPGALAFAIIWPFIAQWLAHLYYQRRRRKLN.

The 90-residue stretch at 44-133 (YETRFEAAVK…MKKIIETMPM (90 aa)) folds into the ACB domain. An acyl-CoA contacts are provided by residues 55–64 (IQSLPKNGSF), 75–79 (YSFYK), Lys101, and Tyr120. Positions 175–215 (AKAVNGKAESSDSGAESEEEEAQEELKGAEQSGSDDKKTLK) are disordered. A coiled-coil region spans residues 181–214 (KAESSDSGAESEEEEAQEELKGAEQSGSDDKKTL). Phosphoserine occurs at positions 184, 185, 187, 191, 206, and 233. Basic and acidic residues predominate over residues 198–215 (EELKGAEQSGSDDKKTLK). Positions 240–260 (SDIHTDSSRSTRSSEDEKPGD) are enriched in basic and acidic residues. The segment at 240 to 300 (SDIHTDSSRS…LTSDSDSEVY (61 aa)) is disordered. Ser303 carries the phosphoserine modification. 2 disordered regions span residues 318–340 (PTQHLESSGFCEDAQQSPGNGSI) and 353–419 (EVKH…RGSR). A compositionally biased stretch (basic and acidic residues) spans 353–376 (EVKHGGEDGRSSSGAPHRETRGGE). Residue Ser405 is modified to Phosphoserine. Residues 408–418 (DGERWGSDRGS) show a composition bias toward basic and acidic residues. Residues 428-453 (LVLIRLQEDMQNVLQRLHKLETLTAS) adopt a coiled-coil conformation. Lys446 bears the N6-acetyllysine mark. A helical membrane pass occupies residues 480–500 (GALAFAIIWPFIAQWLAHLYY).

The protein belongs to the ATG37 family.

The protein localises to the peroxisome membrane. Its function is as follows. Acyl-CoA binding protein which acts as the peroxisome receptor for pexophagy but is dispensable for aggrephagy and nonselective autophagy. Binds medium- and long-chain acyl-CoA esters. This is Acyl-CoA-binding domain-containing protein 5 (Acbd5) from Mus musculus (Mouse).